The sequence spans 390 residues: Probable tRNA pseudouridine synthase D (390 aa).

Residue Asp93 is the Nucleophile of the active site. Residues 166-353 (HVLNYFGIQR…YGTRRKLITP (188 aa)) enclose the TRUD domain.

It belongs to the pseudouridine synthase TruD family.

The enzyme catalyses uridine(13) in tRNA = pseudouridine(13) in tRNA. Could be responsible for synthesis of pseudouridine from uracil-13 in transfer RNAs. The protein is Probable tRNA pseudouridine synthase D of Methanococcus vannielii (strain ATCC 35089 / DSM 1224 / JCM 13029 / OCM 148 / SB).